Reading from the N-terminus, the 349-residue chain is NADH-ubiquinone oxidoreductase chain 2 (349 aa).

The next 9 helical transmembrane spans lie at 3 to 23, 66 to 86, 98 to 118, 139 to 159, 178 to 198, 199 to 219, 240 to 260, 274 to 294, and 319 to 339; these read PYVL…TFAS, AAAM…EWEI, VMLA…LPEV, FALM…TIGL, ILAY…QFAP, SLTL…FLTL, LAAL…LSGF, GLPL…YFYL, and FTMI…LLPL.

It belongs to the complex I subunit 2 family.

Its subcellular location is the mitochondrion inner membrane. The enzyme catalyses a ubiquinone + NADH + 5 H(+)(in) = a ubiquinol + NAD(+) + 4 H(+)(out). Core subunit of the mitochondrial membrane respiratory chain NADH dehydrogenase (Complex I) that is believed to belong to the minimal assembly required for catalysis. Complex I functions in the transfer of electrons from NADH to the respiratory chain. The immediate electron acceptor for the enzyme is believed to be ubiquinone. This Oncorhynchus mykiss (Rainbow trout) protein is NADH-ubiquinone oxidoreductase chain 2 (MT-ND2).